Reading from the N-terminus, the 517-residue chain is GMP synthase [glutamine-hydrolyzing] (517 aa).

A Glutamine amidotransferase type-1 domain is found at 9 to 199 (RILILDFGSQ…VLNACGCEGL (191 aa)). The Nucleophile role is filled by Cys86. Residues His173 and Glu175 contribute to the active site. The region spanning 200-392 (WTSASIIEDA…LGLPYNMLYR (193 aa)) is the GMPS ATP-PPase domain. 227-233 (SGGVDSS) is a binding site for ATP.

As to quaternary structure, homodimer.

The enzyme catalyses XMP + L-glutamine + ATP + H2O = GMP + L-glutamate + AMP + diphosphate + 2 H(+). It participates in purine metabolism; GMP biosynthesis; GMP from XMP (L-Gln route): step 1/1. In terms of biological role, catalyzes the synthesis of GMP from XMP. This Vibrio atlanticus (strain LGP32) (Vibrio splendidus (strain Mel32)) protein is GMP synthase [glutamine-hydrolyzing].